Consider the following 60-residue polypeptide: U-scutigerotoxin(02)-Tl4a (60 aa).

It belongs to the scutigerotoxin-02 family. In terms of processing, contains 3 disulfide bonds. In terms of tissue distribution, expressed by the venom gland.

The protein localises to the secreted. The chain is U-scutigerotoxin(02)-Tl4a from Thereuopoda longicornis (Long-legged centipede).